The following is a 165-amino-acid chain: AP-3 complex subunit sigma (165 aa).

It belongs to the adaptor complexes small subunit family. Adaptor protein complex 3 (AP-3) is a heterotetramer composed of 2 large adaptins (apl5 and apl6), a medium adaptin (apm3) and a small adaptin (aps3).

Its subcellular location is the golgi apparatus. The protein localises to the cytoplasmic vesicle membrane. Functionally, part of the AP-3 complex, an adaptor-related complex which is not clathrin-associated. The complex is associated with the Golgi region as well as more peripheral structures. It facilitates the budding of vesicles from the Golgi membrane and may be directly involved in trafficking to the vacuole. This chain is AP-3 complex subunit sigma (aps3), found in Schizosaccharomyces pombe (strain 972 / ATCC 24843) (Fission yeast).